A 420-amino-acid polypeptide reads, in one-letter code: Reticulon-4 receptor-like 2 (420 aa).

A signal peptide spans 1 to 30 (MLPGLRRLLQGPASACLLLTLLALPPVTPS). 2 cysteine pairs are disulfide-bonded: Cys31/Cys37 and Cys35/Cys46. In terms of domain architecture, LRRNT spans 31–60 (CPMLCTCYSSPPTVSCQANNFSSVPLSLPP). Residue Asn50 is glycosylated (N-linked (GlcNAc...) asparagine). LRR repeat units lie at residues 61–82 (STQRLFLQNNLIRSLRPGTFGP), 83–104 (NLLTLWLFSNNLSTIYPGTFRH), 107–129 (ALEELDLGDNRHLRSLEPDTFQG), 132–153 (RLQSLHLYRCQLSSLPGNIFRG), 156–177 (SLQYLYLQENSLLHLQDDLFAD), 180–201 (NLSHLFLHGNRLRLLTEHVFRG), 204–225 (SLDRLLLHGNRLQGVHRAAFHG), and 228–249 (RLTILYLFNNSLASLPGEALAD). Residue Asn93 is glycosylated (N-linked (GlcNAc...) asparagine). The N-linked (GlcNAc...) asparagine glycan is linked to Asn236. One can recognise an LRRCT domain in the interval 261–312 (NPWACDCRARPLWAWFQRARVSSSDVTCATPPERQGRDLRTLRDTDFQACPP). 2 disulfides stabilise this stretch: Cys265-Cys288 and Cys267-Cys310. The interval 286–390 (VTCATPPERQ…GEQTCPGAAC (105 aa)) is disordered. Positions 294-306 (RQGRDLRTLRDTD) are enriched in basic and acidic residues. Residues 315–327 (PTRPGSRARGNSS) are important for interaction with MAG. A compositionally biased stretch (basic and acidic residues) spans 351-360 (LPAEDSRGRQ). Cys390 carries the GPI-anchor amidated cysteine lipid modification. The propeptide at 391–420 (QAPADSRGPVLSAGLRTPLLCLLLLAPHHL) is removed in mature form.

This sequence belongs to the Nogo receptor family. In terms of assembly, interaction with MAG is controversial, and may be indirect. Interacts with MAG. Does not interact with OMG and RTN4. Undergoes zinc metalloproteinase-mediated ectodomain shedding in neuroblastoma cells; is released both as a full-length ectodomain and an N-terminal fragment containing the leucine-rich repeat (LRR) region of the protein. Post-translationally, N-glycosylated. O-glycosylated. Contains terminal sialic acid groups on its glycan chains. As to expression, detected in adult brain, in neocortex, hippocampus, striatum and dorsal root ganglion neurons, and in retina (at protein level). In brain, detected in cerebral cortex and hippocampus. Weak or no expression detected in the cerebellum, thalamus or striatum.

It localises to the cell membrane. The protein localises to the cell projection. It is found in the dendrite. The protein resides in the perikaryon. Its subcellular location is the axon. It localises to the membrane raft. Functionally, cell surface receptor that plays a functionally redundant role in the inhibition of neurite outgrowth mediated by MAG. Plays a functionally redundant role in postnatal brain development. Contributes to normal axon migration across the brain midline and normal formation of the corpus callosum. Does not seem to play a significant role in regulating axon regeneration in the adult central nervous system. Protects motoneurons against apoptosis; protection against apoptosis is probably mediated by MAG. Like other family members, plays a role in restricting the number dendritic spines and the number of synapses that are formed during brain development. Signaling mediates activation of Rho and downstream reorganization of the actin cytoskeleton. This chain is Reticulon-4 receptor-like 2, found in Rattus norvegicus (Rat).